A 298-amino-acid chain; its full sequence is Inosose dehydratase (298 aa).

The protein belongs to the IolE/MocC family. Glutathione serves as cofactor. The cofactor is Co(2+). Requires Mn(2+) as cofactor.

The enzyme catalyses scyllo-inosose = 3D-3,5/4-trihydroxycyclohexane-1,2-dione + H2O. Its function is as follows. Catalyzes the dehydration of inosose (2-keto-myo-inositol, 2KMI or 2,4,6/3,5-pentahydroxycyclohexanone) to 3D-(3,5/4)-trihydroxycyclohexane-1,2-dione (D-2,3-diketo-4-deoxy-epi-inositol). This Histophilus somni (strain 129Pt) (Haemophilus somnus) protein is Inosose dehydratase.